Reading from the N-terminus, the 279-residue chain is Putative pyruvate, phosphate dikinase regulatory protein (279 aa).

154-161 is an ADP binding site; the sequence is GVSRTSKT.

This sequence belongs to the pyruvate, phosphate/water dikinase regulatory protein family. PDRP subfamily.

The enzyme catalyses N(tele)-phospho-L-histidyl/L-threonyl-[pyruvate, phosphate dikinase] + ADP = N(tele)-phospho-L-histidyl/O-phospho-L-threonyl-[pyruvate, phosphate dikinase] + AMP + H(+). It carries out the reaction N(tele)-phospho-L-histidyl/O-phospho-L-threonyl-[pyruvate, phosphate dikinase] + phosphate + H(+) = N(tele)-phospho-L-histidyl/L-threonyl-[pyruvate, phosphate dikinase] + diphosphate. Its function is as follows. Bifunctional serine/threonine kinase and phosphorylase involved in the regulation of the pyruvate, phosphate dikinase (PPDK) by catalyzing its phosphorylation/dephosphorylation. The polypeptide is Putative pyruvate, phosphate dikinase regulatory protein (Rhodopseudomonas palustris (strain BisB18)).